The following is a 417-amino-acid chain: Serine hydroxymethyltransferase 1 (417 aa).

Residues leucine 121 and 125 to 127 contribute to the (6S)-5,6,7,8-tetrahydrofolate site; that span reads GHL. The residue at position 229 (lysine 229) is an N6-(pyridoxal phosphate)lysine. 354 to 356 is a (6S)-5,6,7,8-tetrahydrofolate binding site; that stretch reads SPF.

It belongs to the SHMT family. As to quaternary structure, homodimer. Pyridoxal 5'-phosphate is required as a cofactor.

It is found in the cytoplasm. It catalyses the reaction (6R)-5,10-methylene-5,6,7,8-tetrahydrofolate + glycine + H2O = (6S)-5,6,7,8-tetrahydrofolate + L-serine. It functions in the pathway one-carbon metabolism; tetrahydrofolate interconversion. The protein operates within amino-acid biosynthesis; glycine biosynthesis; glycine from L-serine: step 1/1. Functionally, catalyzes the reversible interconversion of serine and glycine with tetrahydrofolate (THF) serving as the one-carbon carrier. This reaction serves as the major source of one-carbon groups required for the biosynthesis of purines, thymidylate, methionine, and other important biomolecules. Also exhibits THF-independent aldolase activity toward beta-hydroxyamino acids, producing glycine and aldehydes, via a retro-aldol mechanism. In Pseudomonas savastanoi pv. phaseolicola (strain 1448A / Race 6) (Pseudomonas syringae pv. phaseolicola (strain 1448A / Race 6)), this protein is Serine hydroxymethyltransferase 1.